The primary structure comprises 1134 residues: Vinculin (1134 aa).

Residues 1-835 form an N-terminal globular head region; sequence MPVFHTRTIE…GAVAKVREAF (835 aa). S97 bears the Phosphoserine mark. The talin-interaction stretch occupies residues 168–208; that stretch reads MTKMAKMIDERQQELTHQEHRVMLVNSMNTVKELLPVLISA. N6-acetyllysine is present on K173. A run of 3 repeats spans residues 259–369, 370–479, and 480–589. The tract at residues 259–589 is 3 X 112 AA tandem repeats; that stretch reads ASKDTEAMKR…LKDLKARMQE (331 aa). Phosphoserine occurs at positions 260, 272, 275, 288, 290, 346, and 434. An N6-acetyllysine modification is found at K496. Phosphotyrosine is present on Y537. Residues S574, S579, and S600 each carry the phosphoserine modification. 2 positions are modified to phosphothreonine: T604 and T672. S721 carries the post-translational modification Phosphoserine. The segment at 741–764 is interaction with ACTN4; the sequence is MANIQPQMLVAGATSIARRANRIL. Phosphoserine occurs at positions 795 and 809. Position 822 is a phosphotyrosine (Y822). The segment at 836-878 is linker (Pro-rich); it reads QPQEPDFPPPPPDLEQLRLTDELAPPKPPLPEGEVPPPRPPPP. The disordered stretch occupies residues 857-887; the sequence is ELAPPKPPLPEGEVPPPRPPPPEEKDEEFPE. Residues 860–876 are compositionally biased toward pro residues; sequence PPKPPLPEGEVPPPRPP. Positions 879 to 1134 are C-terminal tail; it reads EEKDEEFPEQ…RWVRKTPWYQ (256 aa). Facilitates phospholipid membrane insertion regions lie at residues 1003-1046 and 1120-1134; these read RLVR…KRIR and AGFT…PWYQ. Position 1133 is a phosphotyrosine; by SRC-type Tyr-kinases (Y1133).

It belongs to the vinculin/alpha-catenin family. As to quaternary structure, exhibits self-association properties. Part of a complex composed of THSD1, PTK2/FAK1, TLN1 and VCL. Interacts with APBB1IP and NRAP. Interacts with TLN1. Interacts with CTNNB1 and this interaction is necessary for its localization to the cell-cell junctions and for its function in regulating cell surface expression of E-cadherin. Interacts with SYNM. Interacts with SORBS1. Interacts with CTNNA1. Binds to ACTN4; this interaction triggers conformational changes. Interacts with FLII. (Microbial infection) Interacts via its globular head domain with the central portion of S.flexneri IcsA (also called VirG). Phosphorylated; on serines, threonines and tyrosines. Phosphorylation on Tyr-1133 in activated platelets affects head-tail interactions and cell spreading but has no effect on actin binding nor on localization to focal adhesion plaques. In terms of processing, acetylated; mainly by myristic acid but also by a small amount of palmitic acid. As to expression, metavinculin is muscle-specific.

The protein localises to the cell membrane. It is found in the cell junction. Its subcellular location is the adherens junction. It localises to the focal adhesion. The protein resides in the cytoplasm. The protein localises to the cytoskeleton. It is found in the sarcolemma. Its subcellular location is the cell projection. It localises to the podosome. Its function is as follows. Actin filament (F-actin)-binding protein involved in cell-matrix adhesion and cell-cell adhesion. Regulates cell-surface E-cadherin expression and potentiates mechanosensing by the E-cadherin complex. May also play important roles in cell morphology and locomotion. The chain is Vinculin (VCL) from Homo sapiens (Human).